Reading from the N-terminus, the 396-residue chain is Mevalonate kinase (396 aa).

ATP is bound by residues lysine 13, asparagine 55, serine 135, and 140-146; that span reads GAGLGSS. Catalysis depends on serine 146, which acts as the Proton donor. Mg(2+) contacts are provided by serine 146 and glutamate 193. Aspartate 204 (proton acceptor) is an active-site residue.

Belongs to the GHMP kinase family. Mevalonate kinase subfamily. In terms of assembly, homodimer. Requires Mg(2+) as cofactor.

The protein resides in the cytoplasm. It localises to the peroxisome. The enzyme catalyses (R)-mevalonate + ATP = (R)-5-phosphomevalonate + ADP + H(+). It participates in isoprenoid biosynthesis; isopentenyl diphosphate biosynthesis via mevalonate pathway; isopentenyl diphosphate from (R)-mevalonate: step 1/3. With respect to regulation, farnesyl pyrophosphate and geranyl pyrophosphate inhibit mevalonate kinase activity by binding competitively at the ATP-binding sites. Functionally, catalyzes the phosphorylation of mevalonate to mevalonate 5-phosphate, a key step in isoprenoid and cholesterol biosynthesis. The sequence is that of Mevalonate kinase from Bos taurus (Bovine).